Reading from the N-terminus, the 287-residue chain is Large ribosomal subunit protein uL2 (287 aa).

Positions 221-287 (RGSVMNPCDH…SKRSRGGRDS (67 aa)) are disordered. Basic residues predominate over residues 258–287 (KTRKRNKPSNKFVLRKRRKTSKRSRGGRDS).

This sequence belongs to the universal ribosomal protein uL2 family. Part of the 50S ribosomal subunit. Forms a bridge to the 30S subunit in the 70S ribosome.

In terms of biological role, one of the primary rRNA binding proteins. Required for association of the 30S and 50S subunits to form the 70S ribosome, for tRNA binding and peptide bond formation. It has been suggested to have peptidyltransferase activity; this is somewhat controversial. Makes several contacts with the 16S rRNA in the 70S ribosome. The protein is Large ribosomal subunit protein uL2 of Synechococcus sp. (strain RCC307).